We begin with the raw amino-acid sequence, 315 residues long: MNQEYLDFELPIAELEAKIEALRAASDDKVDLTDEIKRLQKKSNELTKKTFANLDAWQVSRMARHPNRPYTLDYIEYIFTEFEELAGDRAFADDKAIVGGLARLDGRPVMVIGHQKGRTVKDKVSRNFGMPAPEGYRKALRLMEMAERFKLPIITFIDTPGAYPGIGAEERGQAEAIARNLREMAQLTVPVICTVIGEGGSGGALAIGVGDKVNMLQYSTYSVISPEGCASILWKSAEKASTAAEVMGLTASRLKELNLIDNIVQEPLGGAHRNYAKIAENLKLRLKEDLAELDGLSKEELLNRRYERLMSYGYC.

Positions 38 to 292 (RLQKKSNELT…KLRLKEDLAE (255 aa)) constitute a CoA carboxyltransferase C-terminal domain.

Belongs to the AccA family. Acetyl-CoA carboxylase is a heterohexamer composed of biotin carboxyl carrier protein (AccB), biotin carboxylase (AccC) and two subunits each of ACCase subunit alpha (AccA) and ACCase subunit beta (AccD).

The protein localises to the cytoplasm. The catalysed reaction is N(6)-carboxybiotinyl-L-lysyl-[protein] + acetyl-CoA = N(6)-biotinyl-L-lysyl-[protein] + malonyl-CoA. Its pathway is lipid metabolism; malonyl-CoA biosynthesis; malonyl-CoA from acetyl-CoA: step 1/1. Functionally, component of the acetyl coenzyme A carboxylase (ACC) complex. First, biotin carboxylase catalyzes the carboxylation of biotin on its carrier protein (BCCP) and then the CO(2) group is transferred by the carboxyltransferase to acetyl-CoA to form malonyl-CoA. This Haemophilus influenzae (strain PittEE) protein is Acetyl-coenzyme A carboxylase carboxyl transferase subunit alpha.